The sequence spans 195 residues: Interferon tau-6 (195 aa).

The N-terminal stretch at 1 to 23 (MAFVLSLLMALVLVSYGPGGSLG) is a signal peptide. Cystine bridges form between C24–C122 and C52–C162. N101 carries an N-linked (GlcNAc...) asparagine glycan.

This sequence belongs to the alpha/beta interferon family. IFN-alphaII subfamily. As to expression, constitutively and exclusively expressed in the mononuclear cells of the extraembryonic trophectoderm.

It is found in the secreted. Its function is as follows. Paracrine hormone primarily responsible for maternal recognition of pregnancy. Interacts with endometrial receptors, probably type I interferon receptors, and blocks estrogen receptor expression, preventing the estrogen-induced increase in oxytocin receptor expression in the endometrium. This results in the suppression of the pulsatile endometrial release of the luteolytic hormone prostaglandin F2-alpha, hindering the regression of the corpus luteum (luteolysis) and therefore a return to ovarian cyclicity. This, and a possible direct effect of IFN-tau on prostaglandin synthesis, leads in turn to continued ovarian progesterone secretion, which stimulates the secretion by the endometrium of the nutrients required for the growth of the conceptus. In summary, displays particularly high antiviral and antiproliferative potency concurrently with particular weak cytotoxicity, high antiluteolytic activity and immunomodulatory properties. In contrast with other IFNs, IFN-tau is not virally inducible. This Ovis aries (Sheep) protein is Interferon tau-6 (IFNT6).